A 1409-amino-acid polypeptide reads, in one-letter code: CRISPR-associated endonuclease Cas9 (1409 aa).

The For RuvC-like nuclease domain role is filled by Asp31. 3 residues coordinate Mg(2+): Asp31, Glu784, and Glu788. Residues 792–949 enclose the HNH Cas9-type domain; it reads TNQGKSNSQQ…DKAGFIQRQL (158 aa). Catalysis depends on His868, which acts as the Proton acceptor for HNH nuclease domain. His1011 serves as a coordination point for Mg(2+). Residues 1121 to 1130 are compositionally biased toward basic and acidic residues; that stretch reads EQNHGLDRGK. Positions 1121-1151 are disordered; that stretch reads EQNHGLDRGKPKGLFNANLSSKPKPNSNENL. Residues 1137–1150 show a composition bias toward polar residues; it reads ANLSSKPKPNSNEN.

Belongs to the CRISPR-associated protein Cas9 family. Subtype II-A subfamily. In terms of assembly, monomer. Binds crRNA and tracrRNA. The cofactor is Mg(2+).

Its activity is regulated as follows. Only has nuclease activity when bound to both gRNAs (crRNA plus tracrRNA). Functionally, CRISPR (clustered regularly interspaced short palindromic repeat) is an adaptive immune system that provides protection against mobile genetic elements (viruses, transposable elements and conjugative plasmids). CRISPR clusters contain spacers, sequences complementary to antecedent mobile elements, and target invading nucleic acids. CRISPR clusters are transcribed and processed into CRISPR RNA (crRNA). In type II CRISPR systems correct processing of pre-crRNA requires a trans-encoded small RNA (tracrRNA), endogenous ribonuclease 3 (rnc) and Cas9. The tracrRNA serves as a guide for ribonuclease 3-aided processing of pre-crRNA. Cas9/crRNA/tracrRNA endonucleolytically cleaves linear or circular dsDNA target complementary to the spacer yielding blunt ends; Cas9 is inactive in the absence of the 2 guide RNAs (gRNA). Cas9 recognizes a 3'-G-rich protospacer adjacent motif (PAM, TGGTG in this organism) in the CRISPR repeat sequences to help distinguish self versus nonself, as targets within the bacterial CRISPR locus do not have PAMs. PAM recognition is also required for catalytic activity. When the CRISPR3/cas system consisting of cas9-cas1-cas2-csn2-CRISPR3 or just cas9-CRISPR3 is expressed in E.coli it prevents plasmids homologous to spacers 1 or 2 from transforming. The polypeptide is CRISPR-associated endonuclease Cas9 (Streptococcus thermophilus).